We begin with the raw amino-acid sequence, 152 residues long: D-aminoacyl-tRNA deacylase (152 aa).

A Gly-cisPro motif, important for rejection of L-amino acids motif is present at residues 137 to 138 (GP).

This sequence belongs to the DTD family. As to quaternary structure, homodimer.

It is found in the cytoplasm. The enzyme catalyses glycyl-tRNA(Ala) + H2O = tRNA(Ala) + glycine + H(+). The catalysed reaction is a D-aminoacyl-tRNA + H2O = a tRNA + a D-alpha-amino acid + H(+). In terms of biological role, an aminoacyl-tRNA editing enzyme that deacylates mischarged D-aminoacyl-tRNAs. Also deacylates mischarged glycyl-tRNA(Ala), protecting cells against glycine mischarging by AlaRS. Acts via tRNA-based rather than protein-based catalysis; rejects L-amino acids rather than detecting D-amino acids in the active site. By recycling D-aminoacyl-tRNA to D-amino acids and free tRNA molecules, this enzyme counteracts the toxicity associated with the formation of D-aminoacyl-tRNA entities in vivo and helps enforce protein L-homochirality. The polypeptide is D-aminoacyl-tRNA deacylase (Methylibium petroleiphilum (strain ATCC BAA-1232 / LMG 22953 / PM1)).